Consider the following 352-residue polypeptide: Cell division protein ZipA (352 aa).

Over 1–6 the chain is Periplasmic; the sequence is MKDLQL. A helical membrane pass occupies residues 7 to 27; it reads VLFVLGAIAIIAVLVHGFWSI. Residues 28–352 are Cytoplasmic-facing; the sequence is RKQQPKSMKQ…KDYLRRLNAA (325 aa). Disordered regions lie at residues 78 to 120 and 138 to 160; these read KPVL…HVEP and PAPTASTSMNTPKKIFNPSTSTA. Polar residues predominate over residues 83–105; the sequence is TNLSQKPHSGTTKLTDTPLQDSL. Over residues 111 to 120 the composition is skewed to basic and acidic residues; the sequence is HKTEPEHVEP. Over residues 141 to 160 the composition is skewed to polar residues; the sequence is TASTSMNTPKKIFNPSTSTA.

Belongs to the ZipA family. In terms of assembly, interacts with FtsZ via their C-terminal domains.

Its subcellular location is the cell inner membrane. Its function is as follows. Essential cell division protein that stabilizes the FtsZ protofilaments by cross-linking them and that serves as a cytoplasmic membrane anchor for the Z ring. Also required for the recruitment to the septal ring of downstream cell division proteins. This chain is Cell division protein ZipA, found in Shewanella frigidimarina (strain NCIMB 400).